Consider the following 252-residue polypeptide: 5'-nucleotidase SurE (252 aa).

A divalent metal cation is bound by residues aspartate 8, aspartate 9, serine 39, and asparagine 95.

Belongs to the SurE nucleotidase family. Requires a divalent metal cation as cofactor.

The protein localises to the cytoplasm. It catalyses the reaction a ribonucleoside 5'-phosphate + H2O = a ribonucleoside + phosphate. Functionally, nucleotidase that shows phosphatase activity on nucleoside 5'-monophosphates. The protein is 5'-nucleotidase SurE of Clostridium botulinum (strain Okra / Type B1).